The following is a 235-amino-acid chain: Large ribosomal subunit protein uL1 (235 aa).

The protein belongs to the universal ribosomal protein uL1 family. As to quaternary structure, part of the 50S ribosomal subunit.

In terms of biological role, binds directly to 23S rRNA. The L1 stalk is quite mobile in the ribosome, and is involved in E site tRNA release. Functionally, protein L1 is also a translational repressor protein, it controls the translation of the L11 operon by binding to its mRNA. The polypeptide is Large ribosomal subunit protein uL1 (Desulfovibrio desulfuricans (strain ATCC 27774 / DSM 6949 / MB)).